Here is a 508-residue protein sequence, read N- to C-terminus: MALWLQTAGQLYLPPSKPVARVLSTDEYVQPTNLVFHTGTDRMLIVGHPYFDIIDSGSNNITVPKCSGNQFRVMRLLFPDPNKFAMIDRAVFNPERERLVWRLEGLEIGRGGPLGIGTSGHPLFNKYGDTENPAAYPLKQNNGDDNRMDVSMDPKQMQLFIVGCKPATGEHWDIAKPCDPAPAKGSCPPIKLTQSIIQDGEMCDTGFGNANFITLQEDKSGVPLDITNEICKYPDLLKMTKDIYGDAVFFFGKREQIYSRHYFVRGGIDGDSLPDSGYYLAPQTDKPQNNLGGYSYFPTPSGSVASSDNQLFNRPYWLHRAQGANNGICWGNQLFITIVDNTRNTNLSISVYKQDAAIDNRYKYKQEDFRQYLRHTEEYEVELILRLCKVPLNPDVLAHLNVMDKNILEDWQLSFVPPPPQGIEDAYRYIMSQATMCPTDVPNTEREDPYKQYTFWTIDLQERFSNELSQFSLGKRYLYQYGLLNGRKRSASSFVTKKSKTVKRKRTK.

This sequence belongs to the papillomaviridae L1 protein family. Self-assembles into homopentamers. The capsid has an icosahedral symmetry and consists of 72 capsomers, with each capsomer being a pentamer of L1. Interacts with the minor capsid protein L2; this interaction is necessary for viral genome encapsidation. Interacts with protein E2; this interaction enhances E2-dependent replication and transcription activation.

The protein localises to the virion. It localises to the host nucleus. Functionally, forms an icosahedral capsid with a T=7 symmetry and a 50 nm diameter. The capsid is composed of 72 pentamers linked to each other by disulfide bonds and associated with L2 proteins. Binds to heparan sulfate proteoglycans on cell surface of basal layer keratinocytes to provide initial virion attachment. This binding mediates a conformational change in the virus capsid that facilitates efficient infection. The virion enters the host cell via endocytosis. During virus trafficking, L1 protein dissociates from the viral DNA and the genomic DNA is released to the host nucleus. The virion assembly takes place within the cell nucleus. Encapsulates the genomic DNA together with protein L2. The chain is Major capsid protein L1 from Homo sapiens (Human).